A 322-amino-acid chain; its full sequence is Phospholipase A1 (322 aa).

An N-terminal signal peptide occupies residues 1–18; sequence MNFKYSILFICFGTLDRG. A disulfide bridge links cysteine 23 with cysteine 106. Serine 156 serves as the catalytic Nucleophile. The Charge relay system role is filled by aspartate 184. Disulfide bonds link cysteine 195-cysteine 200 and cysteine 238-cysteine 246. Catalysis depends on histidine 248, which acts as the Charge relay system. 3 disulfides stabilise this stretch: cysteine 263/cysteine 290, cysteine 264/cysteine 315, and cysteine 283/cysteine 288.

This sequence belongs to the AB hydrolase superfamily. Lipase family. Post-translationally, contains six disulfide bonds. Is not glycosylated. Expressed by the venom gland.

The protein resides in the secreted. It carries out the reaction a 1,2-diacyl-sn-glycero-3-phosphocholine + H2O = a 2-acyl-sn-glycero-3-phosphocholine + a fatty acid + H(+). In terms of biological role, catalyzes the hydrolysis of phosphatidylcholine with phospholipase A1 activity. Shows hemolytic activity. Acts as an allergen. This Polybia paulista (Neotropical social wasp) protein is Phospholipase A1.